A 4146-amino-acid chain; its full sequence is DNA-dependent protein kinase catalytic subunit (4146 aa).

HEAT repeat units lie at residues D308–I343, V925–M962, Q1026–S1062, and P1075–F1111. 2 TPR repeats span residues P1745–P1778 and V1974–Y2007. S2075 carries the post-translational modification Phosphoserine; by autocatalysis. T2631 carries the post-translational modification Phosphothreonine; by autocatalysis. S2634 carries the phosphoserine; by autocatalysis modification. A phosphothreonine; by autocatalysis mark is found at T2659 and T2668. Positions F2873–S3556 constitute an FAT domain. The 333-residue stretch at F3739 to G4071 folds into the PI3K/PI4K catalytic domain. Residues V3745–K3751 are G-loop. The segment at G3937–N3945 is catalytic loop. The activation loop stretch occupies residues G3957 to T3982. An FATC domain is found at D4114–I4146.

It belongs to the PI3/PI4-kinase family. As to quaternary structure, DNA-PK is a heterotrimer of prkdc and the Ku dimer (composed of xrcc6/Ku70 and xrcc5/Ku86). Component of the core long-range non-homologous end joining (NHEJ) complex (also named DNA-PK complex) composed of prkdc, lig4, xrcc4, xrcc6/ku70, xrcc5/ku86 and nhej1/xlf. Additional component of the NHEJ complex includes paxx. Following autophosphorylation, prkdc dissociates from DNA. Autophosphorylated at two clusters, the T2609 cluster and the S2056 cluster. Autophosphorylated on Ser-2075, Thr-2631, Thr-2659 and Thr-2668. Ser-2075 and Thr-2668 are DNA damage-inducible phosphorylation sites (inducible with ionizing radiation, IR) dephosphorylated by PPP5C. Autophosphorylation induces a conformational change that leads to remodeling of the DNA-PK complex, requisite for efficient end processing and DNA repair. Autophosphorylation in trans within DNA-PK complexes loaded on DNA ends leads to the dissociation of PRKDC from DNA and the transition into the short-range NHEJ complex. Autophosphorylation of the T2609 cluster is required for hematopoietic development and protein synthesis in erythrocytes precursors.

The protein resides in the nucleus. Its subcellular location is the nucleolus. The catalysed reaction is L-seryl-[protein] + ATP = O-phospho-L-seryl-[protein] + ADP + H(+). The enzyme catalyses L-threonyl-[protein] + ATP = O-phospho-L-threonyl-[protein] + ADP + H(+). Serine/threonine-protein kinase that acts as a molecular sensor for DNA damage. Involved in DNA nonhomologous end joining (NHEJ) required for double-strand break (DSB) repair and V(D)J recombination. Must be bound to DNA to express its catalytic properties. Promotes processing of hairpin DNA structures in V(D)J recombination by activation of the hairpin endonuclease artemis (DCLRE1C). Recruited by XRCC5 and XRCC6 to DNA ends and is required to (1) protect and align broken ends of DNA, thereby preventing their degradation, (2) and sequester the DSB for repair by NHEJ. Acts as a scaffold protein to aid the localization of DNA repair proteins to the site of damage. The assembly of the DNA-PK complex at DNA ends is also required for the NHEJ ligation step. Found at the ends of chromosomes, suggesting a further role in the maintenance of telomeric stability and the prevention of chromosomal end fusion. As part of the DNA-PK complex, involved in the early steps of ribosome assembly by promoting the processing of precursor rRNA into mature 18S rRNA in the small-subunit processome. Recognizes the substrate consensus sequence [ST]-Q. Phosphorylates 'Ser-139' of histone variant H2AX, thereby regulating DNA damage response mechanism. The chain is DNA-dependent protein kinase catalytic subunit (prkdc) from Xenopus laevis (African clawed frog).